Consider the following 377-residue polypeptide: Alanine racemase (377 aa).

The active-site Proton acceptor; specific for D-alanine is the lysine 37. Lysine 37 carries the N6-(pyridoxal phosphate)lysine modification. Arginine 135 lines the substrate pocket. Catalysis depends on tyrosine 271, which acts as the Proton acceptor; specific for L-alanine. Methionine 319 is a binding site for substrate.

It belongs to the alanine racemase family. Pyridoxal 5'-phosphate serves as cofactor.

It catalyses the reaction L-alanine = D-alanine. Its pathway is amino-acid biosynthesis; D-alanine biosynthesis; D-alanine from L-alanine: step 1/1. Its function is as follows. Catalyzes the interconversion of L-alanine and D-alanine. May also act on other amino acids. The sequence is that of Alanine racemase (alr) from Helicobacter pylori (strain HPAG1).